A 364-amino-acid polypeptide reads, in one-letter code: UDP-N-acetylglucosamine--N-acetylmuramyl-(pentapeptide) pyrophosphoryl-undecaprenol N-acetylglucosamine transferase (364 aa).

Residues 19–21 (TGG), Asn-131, Arg-167, Ser-195, Ile-250, and Gln-295 contribute to the UDP-N-acetyl-alpha-D-glucosamine site.

This sequence belongs to the glycosyltransferase 28 family. MurG subfamily.

Its subcellular location is the cell inner membrane. The enzyme catalyses di-trans,octa-cis-undecaprenyl diphospho-N-acetyl-alpha-D-muramoyl-L-alanyl-D-glutamyl-meso-2,6-diaminopimeloyl-D-alanyl-D-alanine + UDP-N-acetyl-alpha-D-glucosamine = di-trans,octa-cis-undecaprenyl diphospho-[N-acetyl-alpha-D-glucosaminyl-(1-&gt;4)]-N-acetyl-alpha-D-muramoyl-L-alanyl-D-glutamyl-meso-2,6-diaminopimeloyl-D-alanyl-D-alanine + UDP + H(+). The protein operates within cell wall biogenesis; peptidoglycan biosynthesis. Its function is as follows. Cell wall formation. Catalyzes the transfer of a GlcNAc subunit on undecaprenyl-pyrophosphoryl-MurNAc-pentapeptide (lipid intermediate I) to form undecaprenyl-pyrophosphoryl-MurNAc-(pentapeptide)GlcNAc (lipid intermediate II). The chain is UDP-N-acetylglucosamine--N-acetylmuramyl-(pentapeptide) pyrophosphoryl-undecaprenol N-acetylglucosamine transferase from Xylella fastidiosa (strain Temecula1 / ATCC 700964).